The sequence spans 556 residues: 2-succinyl-5-enolpyruvyl-6-hydroxy-3-cyclohexene-1-carboxylate synthase (556 aa).

The protein belongs to the TPP enzyme family. MenD subfamily. Homodimer. Mg(2+) serves as cofactor. The cofactor is Mn(2+). Requires thiamine diphosphate as cofactor.

The enzyme catalyses isochorismate + 2-oxoglutarate + H(+) = 5-enolpyruvoyl-6-hydroxy-2-succinyl-cyclohex-3-ene-1-carboxylate + CO2. It functions in the pathway quinol/quinone metabolism; 1,4-dihydroxy-2-naphthoate biosynthesis; 1,4-dihydroxy-2-naphthoate from chorismate: step 2/7. It participates in quinol/quinone metabolism; menaquinone biosynthesis. Functionally, catalyzes the thiamine diphosphate-dependent decarboxylation of 2-oxoglutarate and the subsequent addition of the resulting succinic semialdehyde-thiamine pyrophosphate anion to isochorismate to yield 2-succinyl-5-enolpyruvyl-6-hydroxy-3-cyclohexene-1-carboxylate (SEPHCHC). In Salmonella typhimurium (strain LT2 / SGSC1412 / ATCC 700720), this protein is 2-succinyl-5-enolpyruvyl-6-hydroxy-3-cyclohexene-1-carboxylate synthase.